The following is a 64-amino-acid chain: Cytochrome c oxidase subunit 5C (64 aa).

The helical transmembrane segment at 16–34 threads the bilayer; that stretch reads VVKELVIGFSLGLVAGGFW.

Belongs to the cytochrome c oxidase subunit 5C family. Sweet potato cytochrome C oxidase consists of at least seven different polypeptides species, subunits I, II, III, IV, Va, Vb, and Vc in order of MW.

The protein localises to the mitochondrion inner membrane. Functionally, this protein is one of the nuclear-coded polypeptide chains of cytochrome c oxidase, the terminal oxidase in mitochondrial electron transport. This is Cytochrome c oxidase subunit 5C (COX5C) from Ipomoea batatas (Sweet potato).